Consider the following 136-residue polypeptide: Phospholipase A2 (136 aa).

Ca(2+)-binding residues include W8, G10, and G12. 5 disulfides stabilise this stretch: C9–C31, C30–C70, C37–C63, C61–C95, and C105–C117. A glycan (N-linked (GlcNAc...) asparagine) is linked at N16. H34 is a catalytic residue. D35 serves as a coordination point for Ca(2+). D64 is a catalytic residue.

It belongs to the phospholipase A2 family. It depends on Ca(2+) as a cofactor. As to expression, expressed by the venom gland.

It localises to the secreted. The enzyme catalyses a 1,2-diacyl-sn-glycero-3-phosphocholine + H2O = a 1-acyl-sn-glycero-3-phosphocholine + a fatty acid + H(+). Its function is as follows. PLA2 catalyzes the calcium-dependent hydrolysis of the 2-acyl groups in 3-sn-phosphoglycerides. This Bombus terrestris (Buff-tailed bumblebee) protein is Phospholipase A2.